A 290-amino-acid polypeptide reads, in one-letter code: Glycine--tRNA ligase alpha subunit (290 aa).

The protein belongs to the class-II aminoacyl-tRNA synthetase family. In terms of assembly, tetramer of two alpha and two beta subunits.

It is found in the cytoplasm. It carries out the reaction tRNA(Gly) + glycine + ATP = glycyl-tRNA(Gly) + AMP + diphosphate. The sequence is that of Glycine--tRNA ligase alpha subunit from Prochlorococcus marinus (strain NATL1A).